Here is a 144-residue protein sequence, read N- to C-terminus: Large ribosomal subunit protein uL11 (144 aa).

Belongs to the universal ribosomal protein uL11 family. In terms of assembly, part of the ribosomal stalk of the 50S ribosomal subunit. Interacts with L10 and the large rRNA to form the base of the stalk. L10 forms an elongated spine to which L12 dimers bind in a sequential fashion forming a multimeric L10(L12)X complex. One or more lysine residues are methylated.

Functionally, forms part of the ribosomal stalk which helps the ribosome interact with GTP-bound translation factors. The chain is Large ribosomal subunit protein uL11 from Polaromonas naphthalenivorans (strain CJ2).